A 356-amino-acid chain; its full sequence is Peptide chain release factor 1 (356 aa).

Glutamine 233 bears the N5-methylglutamine mark.

Belongs to the prokaryotic/mitochondrial release factor family. Methylated by PrmC. Methylation increases the termination efficiency of RF1.

The protein localises to the cytoplasm. In terms of biological role, peptide chain release factor 1 directs the termination of translation in response to the peptide chain termination codons UAG and UAA. This is Peptide chain release factor 1 from Endomicrobium trichonymphae.